We begin with the raw amino-acid sequence, 1435 residues long: Sterol 3-beta-glucosyltransferase (1435 aa).

Disordered stretches follow at residues 1–26 (MAPDDESKKRATRKSTKRWKEEHQVA), 75–107 (SDEEYDLGKPTRQSSESHINRSSIDQKMGKFEG), 123–169 (RFSS…KDTP), and 185–206 (PSFEMPRKSKDPAEVDDERTSP). Residues 85 to 99 (TRQSSESHINRSSID) show a composition bias toward polar residues. Positions 123–133 (RFSSRSKSKSS) are enriched in low complexity. The span at 134–143 (NTIARGSRTP) shows a compositional bias: polar residues. Residues 189–206 (MPRKSKDPAEVDDERTSP) show a composition bias toward basic and acidic residues. A GRAM 1 domain is found at 211 to 258 (ERLMEIFKFETPEDVLEEYPCWLMKSVLLQGYMYITTKHICFYAYLPK). The PH domain occupies 262–360 (EVVKSGYLSK…WVKALQKIIF (99 aa)). Disordered regions lie at residues 444–477 (LSTADDSRGSSKRTSFQVSRDRKLHGPSVQPNAP), 527–594 (DLNR…QASA), 610–671 (QHSP…QAEI), and 727–759 (GKKHYEEPHGIPRDNEMPSIGDDDDNRDGATPA). Residues 527–537 (DLNRLTTEHHR) show a composition bias toward basic and acidic residues. Polar residues-rich tracts occupy residues 539 to 554 (NSANSISTRRSLSTNR), 628 to 647 (KSRSLTSPIKSADVSPTRTQ), and 657 to 671 (TTGSVSDSNVGQAEI). The span at 729–742 (KHYEEPHGIPRDNE) shows a compositional bias: basic and acidic residues. A GRAM 2 domain is found at 760-826 (DRFRDHFALP…KDIENVDKEK (67 aa)). Residues serine 949, arginine 950, aspartate 952, alanine 1252, histidine 1254, histidine 1267, glycine 1271, threonine 1272, aspartate 1291, and glutamine 1292 each contribute to the UDP-alpha-D-glucose site.

Belongs to the glycosyltransferase 28 family.

Its subcellular location is the cytoplasm. It is found in the preautophagosomal structure membrane. The catalysed reaction is a sterol + UDP-alpha-D-glucose = a sterol 3-beta-D-glucoside + UDP + H(+). The enzyme catalyses ergosterol + UDP-alpha-D-glucose = ergosteryl 3-beta-D-glucoside + UDP + H(+). In terms of biological role, sterol glycosyltransferase responsible for the glycosylation of ergosterol to form ergosterol-glucoside. The chain is Sterol 3-beta-glucosyltransferase from Sclerotinia sclerotiorum (strain ATCC 18683 / 1980 / Ss-1) (White mold).